A 307-amino-acid polypeptide reads, in one-letter code: tRNA N6-adenosine threonylcarbamoyltransferase (307 aa).

2 residues coordinate Fe cation: histidine 108 and histidine 112. Substrate is bound by residues 131–135, aspartate 164, glycine 177, aspartate 181, and asparagine 266; that span reads IVSGG. Aspartate 290 contacts Fe cation.

This sequence belongs to the KAE1 / TsaD family. It depends on Fe(2+) as a cofactor.

The protein localises to the cytoplasm. It catalyses the reaction L-threonylcarbamoyladenylate + adenosine(37) in tRNA = N(6)-L-threonylcarbamoyladenosine(37) in tRNA + AMP + H(+). In terms of biological role, required for the formation of a threonylcarbamoyl group on adenosine at position 37 (t(6)A37) in tRNAs that read codons beginning with adenine. Is involved in the transfer of the threonylcarbamoyl moiety of threonylcarbamoyl-AMP (TC-AMP) to the N6 group of A37, together with TsaE and TsaB. TsaD likely plays a direct catalytic role in this reaction. This chain is tRNA N6-adenosine threonylcarbamoyltransferase, found in Mycoplasmopsis synoviae (strain 53) (Mycoplasma synoviae).